Here is a 209-residue protein sequence, read N- to C-terminus: SelT-like protein (209 aa).

An N-terminal signal peptide occupies residues 1-22; that stretch reads MDKTQLILLGLPIFLLCSDLFN. A disulfide bridge connects residues C64 and C67.

Belongs to the SelWTH family. SELT subfamily.

This Arabidopsis thaliana (Mouse-ear cress) protein is SelT-like protein.